A 1314-amino-acid chain; its full sequence is E3 ubiquitin-protein ligase RNF123 (1314 aa).

A2 is subject to N-acetylalanine. The B30.2/SPRY domain occupies 74-254 (VDSEDNESQG…VAFNFGSRPL (181 aa)). Residues 460-483 (HRSSRESRDGKEAREETTEERQRR) form a disordered region. Over residues 462–483 (SSRESRDGKEAREETTEERQRR) the composition is skewed to basic and acidic residues. S675 carries the phosphoserine modification. The residue at position 683 (R683) is an Asymmetric dimethylarginine. The interaction with NFKB1 stretch occupies residues 968 to 974 (WILVRLW). Zn(2+) is bound by residues C1254, C1257, C1269, H1271, C1274, C1277, C1288, and C1291. An RING-type zinc finger spans residues 1254–1292 (CPICYAHPISAVFQPCGHKSCKACINQHLMNNKDCFFCK).

Component of the KPC complex composed of RNF123/KPC1 and UBAC1/KPC2. Interacts with UBAC1 and CDKN1B via its N-terminal domain. Interacts with RIGI (via N-terminus) and IFIH1 (via N-terminus). Ubiquitinated, leading to its degradation. Deubiquitinated by USP19, thereby stimulating CDKN1B ubiquitin-dependent degradation.

Its subcellular location is the cytoplasm. It catalyses the reaction S-ubiquitinyl-[E2 ubiquitin-conjugating enzyme]-L-cysteine + [acceptor protein]-L-lysine = [E2 ubiquitin-conjugating enzyme]-L-cysteine + N(6)-ubiquitinyl-[acceptor protein]-L-lysine.. Its pathway is protein modification; protein ubiquitination. In terms of biological role, catalytic subunit of the KPC complex that acts as E3 ubiquitin-protein ligase. Promotes the ubiquitination and proteasome-mediated degradation of CDKN1B which is the cyclin-dependent kinase inhibitor at the G0-G1 transition of the cell cycle. Also acts as a key regulator of the NF-kappa-B signaling by promoting maturation of the NFKB1 component of NF-kappa-B: acts by catalyzing ubiquitination of the NFKB1 p105 precursor, leading to limited proteasomal degradation of NFKB1 p105 and generation of the active NFKB1 p50 subunit. Functions also as an inhibitor of innate antiviral signaling mediated by RIGI and IFIH1 independently of its E3 ligase activity. Interacts with the N-terminal CARD domains of RIGI and IFIH1 and competes with the downstream adapter MAVS. This Mus musculus (Mouse) protein is E3 ubiquitin-protein ligase RNF123 (Rnf123).